A 34-amino-acid polypeptide reads, in one-letter code: Turripeptide Pal9a (34 aa).

3 cysteine pairs are disulfide-bonded: cysteine 3–cysteine 17, cysteine 8–cysteine 19, and cysteine 13–cysteine 30. Position 34 is a glutamine amide (glutamine 34).

As to expression, expressed by the venom duct.

Its subcellular location is the secreted. In Polystira albida (White giant-turris), this protein is Turripeptide Pal9a.